We begin with the raw amino-acid sequence, 142 residues long: MTSILFEDTFEVKEIDPDGKKFDRVSRFVCYSENYEMDLQIDIATHIYPLGHERFKMVLASSLNLDGSSDNSGSYDTNKPSLADKYDYVMYGKIFKYQKENSSSKVSVFASFGGLLVLLQGDPRYLPGIELDARIYLLIKKA.

The tract at residues 16 to 40 (DPDGKKFDRVSRFVCYSENYEMDLQ) is non-specific ssDNA binding.

The protein belongs to the eukaryotic RPB8 RNA polymerase subunit family. In terms of assembly, component of the RNA polymerase I (Pol I), RNA polymerase II (Pol II) and RNA polymerase III (Pol III) complexes consisting of at least 13, 12 and 17 subunits, respectively. Directly interacts with POLR2A.

It localises to the nucleus. The protein resides in the nucleolus. Its function is as follows. DNA-dependent RNA polymerase catalyzes the transcription of DNA into RNA using the four ribonucleoside triphosphates as substrates. Common component of RNA polymerases I, II and III which synthesize ribosomal RNA precursors, mRNA precursors and many functional non-coding RNAs, and small RNAs, such as 5S rRNA and tRNAs, respectively. The protein is DNA-directed RNA polymerases I, II, and III subunit rpabc3 (polr2h) of Dictyostelium discoideum (Social amoeba).